A 318-amino-acid polypeptide reads, in one-letter code: Olfactory receptor 13C7 (318 aa).

Over 1–27 (MVSANQTASVTEFILLGLSAHPKLEKT) the chain is Extracellular. A helical membrane pass occupies residues 28 to 48 (FFVLILLMYLVILLGNGVLIL). The Cytoplasmic segment spans residues 49–61 (MTVSNSHLHMPMY). A helical membrane pass occupies residues 62-82 (FFLGNLSFLDICYTTSSVPLI). The Extracellular segment spans residues 83 to 100 (LDSFLTPRKTISFSACAV). The helical transmembrane segment at 101 to 121 (QMFLSFAMGATECVLLSMMAF) threads the bilayer. Over 122–181 (DRYVAICNPLRYPVVMSKAAYMPKAAGSWVAGSTASMVQTSLAMRLPFCGDNIINHFTCE) the chain is Cytoplasmic. The helical transmembrane segment at 182–202 (ILAVLKLACADISVNVISMGV) threads the bilayer. The Extracellular portion of the chain corresponds to 203–205 (TNV). Residues 206–226 (IFLGVPVLFISFSYVFIIATI) form a helical membrane-spanning segment. At 227-238 (LRIPSAEGRKKA) the chain is on the cytoplasmic side. Residues 239 to 259 (FSTCSAHLTVVVIFYGTILFM) traverse the membrane as a helical segment. Residues 260–278 (YGKPKSKDPLGADKQDLAD) lie on the Extracellular side of the membrane. Residues 279 to 289 (KLISLFYGVVT) form a helical membrane-spanning segment. Residues 290 to 318 (PMLNPIIYSLRNKDVKAAVRDLIFQKCFA) are Cytoplasmic-facing.

This sequence belongs to the G-protein coupled receptor 1 family.

It is found in the cell membrane. Functionally, odorant receptor. In Homo sapiens (Human), this protein is Olfactory receptor 13C7.